A 551-amino-acid chain; its full sequence is MGEINRRNFLKVSILGAAAAAVASASAVKGMVSPLVADAADIVAPITETSEFPYKVDAKYQRYNSLKNFFEKTFDPEANKTPIKFHYDDVSKITGKKDTGKDLPTLNAERLGIKGRPATHTETSILFHTQHLGAMLTQRHNETGWTGLDEALNAGAWAVEFDYSGFNATGGGPGSVIPLYPINPMTNEIANEPVMVPGLYNWDNIDVESVRQQGQQWKFESKEEASKIVKKATRLLGADLVGIAPYDERWTYSTWGRKIYKPCKMPNGRTKYLPWDLPKMLSGGGVEVFGHAKFEPDWEKYAGFKPKSVIVFVLEEDYEAIRTSPSVISSATVGKSYSNMAEVAYKIAVFLRKLGYYAAPCGNDTGISVPMAVQAGLGEAGRNGLLITQKFGPRHRIAKVYTDLELAPDKPRKFGVREFCRLCKKCADACPAQAISHEKDPKVLQPEDCEVAENPYTEKWHLDSNRCGSFWAYNGSPCSNCVAVCSWNKVETWNHDVARVATQIPLLQDAARKFDEWFGYNGPVNPDERLESGYVQNMVKDFWNNPESIKQ.

Positions 1 to 39 form a signal peptide, tat-type signal; it reads MGEINRRNFLKVSILGAAAAAVASASAVKGMVSPLVADA. Positions 411–440 constitute a 4Fe-4S ferredoxin-type 1 domain; sequence PRKFGVREFCRLCKKCADACPAQAISHEKD. Positions 420, 423, 426, 430, 467, 478, 481, and 485 each coordinate [4Fe-4S] cluster. The 19-residue stretch at 478–496 folds into the 4Fe-4S ferredoxin-type 2 domain; it reads CSNCVAVCSWNKVETWNHD.

The protein belongs to the PceA family. The cofactor is [4Fe-4S] cluster. Corrinoid serves as cofactor. In terms of processing, predicted to be exported by the Tat system. The position of the signal peptide cleavage has been experimentally proven.

It localises to the cytoplasm. The protein resides in the cell membrane. It is found in the secreted. It carries out the reaction trichloroethene + chloride + A + H(+) = tetrachloroethene + AH2. It catalyses the reaction trichloroethene + AH2 = (Z)-1,2-dichloroethene + chloride + A + H(+). PceT is required as a chaperone for prePceA maturation. In the absence or presence of exogenous vitamin B12, the intracellular corrinoid level decreases in fumarate-grown cells and the PceA precursor forms catalytically inactive, corrinoid-free multiprotein aggregates. Exogenous vitamin B12 is not incorporated into the PceA precursor, even though it affects the transposition of the pce gene cluster. Its function is as follows. Catalyzes the reductive dechlorination of tetrachloroethene (PCE) to trichloroethene (TCE) and of trichloroethene to cis-1,2-dichloroethene (DCE). Can also use various chlorinated ethanes such as tetrachloroethane, pentachloroethane and hexachloroethane. Reduced methyl viologen can act as the artificial electron donor. The sequence is that of Tetrachloroethene reductive dehalogenase from Desulfitobacterium hafniense (strain Y51).